Consider the following 37-residue polypeptide: Large ribosomal subunit protein bL36 (37 aa).

This sequence belongs to the bacterial ribosomal protein bL36 family.

In Streptomyces avermitilis (strain ATCC 31267 / DSM 46492 / JCM 5070 / NBRC 14893 / NCIMB 12804 / NRRL 8165 / MA-4680), this protein is Large ribosomal subunit protein bL36.